We begin with the raw amino-acid sequence, 356 residues long: Phosphoribosyl pyrophosphate synthase-associated protein 1 (356 aa).

M1 carries the N-acetylmethionine modification. S177 and S215 each carry phosphoserine.

The protein belongs to the ribose-phosphate pyrophosphokinase family. In terms of assembly, binds to PRPS1 and PRPS2.

Its function is as follows. Seems to play a negative regulatory role in 5-phosphoribose 1-diphosphate synthesis. This Bos taurus (Bovine) protein is Phosphoribosyl pyrophosphate synthase-associated protein 1 (PRPSAP1).